Here is a 338-residue protein sequence, read N- to C-terminus: (-)-alpha-amorphene synthase ((2E,6E)-farnesyl diphosphate cyclizing) (338 aa).

Aspartate 105 and glutamate 109 together coordinate Mg(2+). The short motif at aspartate 105 to glutamate 109 is the DDXXE motif element. Residue arginine 196 participates in substrate binding. Serine 246 is a Mg(2+) binding site. Lysine 249 is a binding site for substrate. Residue glutamate 250 participates in Mg(2+) binding. Arginine 327–tyrosine 328 is a binding site for substrate.

Belongs to the terpene synthase family. It depends on Mg(2+) as a cofactor.

It catalyses the reaction (2E,6E)-farnesyl diphosphate = (-)-alpha-amorphene + diphosphate. Its pathway is secondary metabolite biosynthesis; terpenoid biosynthesis. In terms of biological role, catalyzes the conversion of (2E,6E)-farnesyl diphosphate (FPP) to yield the bicyclic sesquiterpene (1R,6S,7S)-(-)-alpha-amorphene via a probable 1,6-cyclization, which could involve the abstraction of the pyrophosphate from FPP to yield a (R)-bisabolyl cation. The only accepted substrate is (2E,6E)-farnesyl diphosphate (FPP). The sequence is that of (-)-alpha-amorphene synthase ((2E,6E)-farnesyl diphosphate cyclizing) from Streptomyces viridochromogenes (strain DSM 40736 / JCM 4977 / BCRC 1201 / Tue 494).